The following is a 615-amino-acid chain: Putative lipase ATG15 (615 aa).

Over 1 to 22 the chain is Cytoplasmic; it reads MKQLGEEHPLISTKRPRAKKRR. Residues 23 to 43 form a helical; Signal-anchor for type II membrane protein membrane-spanning segment; the sequence is SIAICAAVLTLIAFGFIRFVP. Topologically, residues 44–615 are lumenal; that stretch reads KDILAGGWYE…NSAAHHVSSI (572 aa). 3 N-linked (GlcNAc...) asparagine glycosylation sites follow: Asn-253, Asn-276, and Asn-360. Ser-378 serves as the catalytic Charge relay system. The segment at 520–559 is disordered; it reads NKNDEPPLPNPLHPKPPSTVRSSNMPHEQSPNASRSLSSL. The segment covering 525–536 has biased composition (pro residues); it reads PPLPNPLHPKPP. Polar residues predominate over residues 538–559; that stretch reads TVRSSNMPHEQSPNASRSLSSL. N-linked (GlcNAc...) asparagine glycosylation is present at Asn-551.

Belongs to the AB hydrolase superfamily. Lipase family. Binds to both phosphatidylinositol (PI) and phosphatidylinositol 3,5-bisphosphate (PIP2).

It is found in the endosome. It localises to the multivesicular body membrane. The protein resides in the prevacuolar compartment membrane. It catalyses the reaction a triacylglycerol + H2O = a diacylglycerol + a fatty acid + H(+). Functionally, lipase which is essential for lysis of subvacuolar cytoplasm to vacuole targeted bodies and intravacuolar autophagic bodies. Involved in the lysis of intravacuolar multivesicular body (MVB) vesicles. The intravacuolar membrane disintegration by ATG15 is critical to life span extension. The sequence is that of Putative lipase ATG15 (ATG15) from Debaryomyces hansenii (strain ATCC 36239 / CBS 767 / BCRC 21394 / JCM 1990 / NBRC 0083 / IGC 2968) (Yeast).